Reading from the N-terminus, the 260-residue chain is (+)-borneol dehydrogenase 1 (260 aa).

NAD(+) contacts are provided by residues 20–26 (GGASGIG), Asp44, 67–68 (DV), and 94–96 (NAG). Residue Ser148 is the Proton donor of the active site. NAD(+)-binding residues include Tyr161, Lys165, and Thr196. Tyr161 serves as the catalytic Proton acceptor. The active-site Proton donor/acceptor is Lys165.

This sequence belongs to the short-chain dehydrogenases/reductases (SDR) family.

The enzyme catalyses (1R,2S,4R)-borneol + NAD(+) = (1R,4R)-camphor + NADH + H(+). Involved in the biosynthesis of monoterpene natural products related to camphor. Catalayzes the oxidation of (+)-borneol to (+)-camphor. Shows absolute selectivity towards (+)-borneol. Catalyzes the oxidation of (+)-isoborneol to (-)-camphor. Shows absolute selectivity towards (+)-isoborneol. The protein is (+)-borneol dehydrogenase 1 of Salvia officinalis (Sage).